We begin with the raw amino-acid sequence, 350 residues long: tRNA dimethylallyltransferase (350 aa).

The interval 1-20 is disordered; sequence MMNTERPAGPLRPPHPPHPP. A compositionally biased stretch (pro residues) spans 10–20; the sequence is PLRPPHPPHPP. Residue 27–34 coordinates ATP; sequence GPTASGKT. 29-34 provides a ligand contact to substrate; it reads TASGKT. Interaction with substrate tRNA stretches follow at residues 52-55, 176-180, and 273-278; these read DSAL, QRIAR, and RCVGYR.

It belongs to the IPP transferase family. In terms of assembly, monomer. Mg(2+) serves as cofactor.

It carries out the reaction adenosine(37) in tRNA + dimethylallyl diphosphate = N(6)-dimethylallyladenosine(37) in tRNA + diphosphate. In terms of biological role, catalyzes the transfer of a dimethylallyl group onto the adenine at position 37 in tRNAs that read codons beginning with uridine, leading to the formation of N6-(dimethylallyl)adenosine (i(6)A). This chain is tRNA dimethylallyltransferase, found in Albidiferax ferrireducens (strain ATCC BAA-621 / DSM 15236 / T118) (Rhodoferax ferrireducens).